Reading from the N-terminus, the 383-residue chain is Deoxyhypusine synthase-like protein (383 aa).

It belongs to the deoxyhypusine synthase family.

The chain is Deoxyhypusine synthase-like protein from Nostoc sp. (strain PCC 7120 / SAG 25.82 / UTEX 2576).